A 1030-amino-acid polypeptide reads, in one-letter code: Translation initiation factor IF-2 (1030 aa).

Low complexity-rich tracts occupy residues 56-69 (APSE…AADS) and 111-132 (PNIV…APIK). Disordered regions lie at residues 56–361 (APSE…KRRQ) and 394–434 (SKPK…REQK). Over residues 134 to 144 (ARPEKSAEKPE) the composition is skewed to basic and acidic residues. The segment covering 154–164 (AASAEPAKSPS) has biased composition (low complexity). Positions 188–206 (LLRKPEIVRRSEAKPERTS) are enriched in basic and acidic residues. Residues 259–273 (VAASASGVPAAASRV) are compositionally biased toward low complexity. Positions 522 to 695 (TRPPVVTVMG…LLVTEVEELV (174 aa)) constitute a tr-type G domain. A G1 region spans residues 531–538 (GHVDHGKT). 531-538 (GHVDHGKT) serves as a coordination point for GTP. Positions 556-560 (GITQH) are G2. A G3 region spans residues 581–584 (DTPG). Residues 581–585 (DTPGH) and 635–638 (NKCD) contribute to the GTP site. Residues 635 to 638 (NKCD) form a G4 region. The segment at 671-673 (SAI) is G5.

It belongs to the TRAFAC class translation factor GTPase superfamily. Classic translation factor GTPase family. IF-2 subfamily.

It localises to the cytoplasm. One of the essential components for the initiation of protein synthesis. Protects formylmethionyl-tRNA from spontaneous hydrolysis and promotes its binding to the 30S ribosomal subunits. Also involved in the hydrolysis of GTP during the formation of the 70S ribosomal complex. The sequence is that of Translation initiation factor IF-2 from Synechococcus elongatus (strain ATCC 33912 / PCC 7942 / FACHB-805) (Anacystis nidulans R2).